We begin with the raw amino-acid sequence, 291 residues long: ATP phosphoribosyltransferase (291 aa).

It belongs to the ATP phosphoribosyltransferase family. Long subfamily. Mg(2+) is required as a cofactor.

Its subcellular location is the cytoplasm. It catalyses the reaction 1-(5-phospho-beta-D-ribosyl)-ATP + diphosphate = 5-phospho-alpha-D-ribose 1-diphosphate + ATP. The protein operates within amino-acid biosynthesis; L-histidine biosynthesis; L-histidine from 5-phospho-alpha-D-ribose 1-diphosphate: step 1/9. Its activity is regulated as follows. Feedback inhibited by histidine. In terms of biological role, catalyzes the condensation of ATP and 5-phosphoribose 1-diphosphate to form N'-(5'-phosphoribosyl)-ATP (PR-ATP). Has a crucial role in the pathway because the rate of histidine biosynthesis seems to be controlled primarily by regulation of HisG enzymatic activity. The sequence is that of ATP phosphoribosyltransferase from Geotalea daltonii (strain DSM 22248 / JCM 15807 / FRC-32) (Geobacter daltonii).